The chain runs to 179 residues: Acireductone dioxygenase (179 aa).

Residues His88, His90, Glu94, and His133 each contribute to the Fe(2+) site. Ni(2+) contacts are provided by His88, His90, Glu94, and His133.

It belongs to the acireductone dioxygenase (ARD) family. As to quaternary structure, monomer. Interacts with MMP14. Fe(2+) is required as a cofactor. Requires Ni(2+) as cofactor.

It localises to the cytoplasm. The protein localises to the nucleus. Its subcellular location is the cell membrane. It catalyses the reaction 1,2-dihydroxy-5-(methylsulfanyl)pent-1-en-3-one + O2 = 4-methylsulfanyl-2-oxobutanoate + formate + 2 H(+). It carries out the reaction 1,2-dihydroxy-5-(methylsulfanyl)pent-1-en-3-one + O2 = 3-(methylsulfanyl)propanoate + CO + formate + 2 H(+). The protein operates within amino-acid biosynthesis; L-methionine biosynthesis via salvage pathway; L-methionine from S-methyl-5-thio-alpha-D-ribose 1-phosphate: step 5/6. Functionally, catalyzes 2 different reactions between oxygen and the acireductone 1,2-dihydroxy-3-keto-5-methylthiopentene (DHK-MTPene) depending upon the metal bound in the active site. Fe-containing acireductone dioxygenase (Fe-ARD) produces formate and 2-keto-4-methylthiobutyrate (KMTB), the alpha-ketoacid precursor of methionine in the methionine recycle pathway. Ni-containing acireductone dioxygenase (Ni-ARD) produces methylthiopropionate, carbon monoxide and formate, and does not lie on the methionine recycle pathway. Also down-regulates cell migration mediated by MMP14. The protein is Acireductone dioxygenase of Macaca mulatta (Rhesus macaque).